The primary structure comprises 313 residues: Ribosomal RNA small subunit methyltransferase H (313 aa).

S-adenosyl-L-methionine is bound by residues 35-37 (GGH), aspartate 55, phenylalanine 79, aspartate 101, and glutamine 108.

This sequence belongs to the methyltransferase superfamily. RsmH family.

It localises to the cytoplasm. It catalyses the reaction cytidine(1402) in 16S rRNA + S-adenosyl-L-methionine = N(4)-methylcytidine(1402) in 16S rRNA + S-adenosyl-L-homocysteine + H(+). In terms of biological role, specifically methylates the N4 position of cytidine in position 1402 (C1402) of 16S rRNA. This is Ribosomal RNA small subunit methyltransferase H from Salmonella typhi.